We begin with the raw amino-acid sequence, 391 residues long: Protein-glutamate methylesterase/protein-glutamine glutaminase (391 aa).

The Response regulatory domain occupies 4-121 (KVLVVDDSSF…ARNNEDAIKL (118 aa)). Aspartate 55 bears the 4-aspartylphosphate mark. The 195-residue stretch at 197–391 (SGKHYQLVAI…IRLKTEVGCG (195 aa)) folds into the CheB-type methylesterase domain. Catalysis depends on residues serine 209, histidine 236, and aspartate 333.

It belongs to the CheB family. In terms of processing, phosphorylated by CheA. Phosphorylation of the N-terminal regulatory domain activates the methylesterase activity.

Its subcellular location is the cytoplasm. It carries out the reaction [protein]-L-glutamate 5-O-methyl ester + H2O = L-glutamyl-[protein] + methanol + H(+). It catalyses the reaction L-glutaminyl-[protein] + H2O = L-glutamyl-[protein] + NH4(+). Functionally, involved in chemotaxis. Part of a chemotaxis signal transduction system that modulates chemotaxis in response to various stimuli. Catalyzes the demethylation of specific methylglutamate residues introduced into the chemoreceptors (methyl-accepting chemotaxis proteins or MCP) by CheR. Also mediates the irreversible deamidation of specific glutamine residues to glutamic acid. The sequence is that of Protein-glutamate methylesterase/protein-glutamine glutaminase from Pseudoalteromonas translucida (strain TAC 125).